The chain runs to 861 residues: Glucans biosynthesis glucosyltransferase H (861 aa).

A run of 6 helical transmembrane segments spans residues 142–162, 188–208, 516–536, 573–593, 600–620, and 683–703; these read FILL…MKGI, VLPY…FCWV, VFLT…FLVL, LFST…MLIW, FGGV…SVLL, and FLWW…VSVI.

The protein belongs to the glycosyltransferase 2 family. OpgH subfamily.

The protein resides in the cell inner membrane. Its pathway is glycan metabolism; osmoregulated periplasmic glucan (OPG) biosynthesis. Involved in the biosynthesis of osmoregulated periplasmic glucans (OPGs). This chain is Glucans biosynthesis glucosyltransferase H, found in Pseudomonas aeruginosa (strain UCBPP-PA14).